The chain runs to 713 residues: Glutamine--fructose-6-phosphate aminotransferase [isomerizing] (713 aa).

Cysteine 2 serves as the catalytic For GATase activity. The 315-residue stretch at 2–316 folds into the Glutamine amidotransferase type-2 domain; it reads CGIFGYVNFL…DDDIAHIYDG (315 aa). 2 SIS domains span residues 389 to 528 and 561 to 703; these read WLST…DSIS and CNSS…VDFP.

Homotetramer.

The enzyme catalyses D-fructose 6-phosphate + L-glutamine = D-glucosamine 6-phosphate + L-glutamate. It participates in nucleotide-sugar biosynthesis; UDP-N-acetyl-alpha-D-glucosamine biosynthesis; alpha-D-glucosamine 6-phosphate from D-fructose 6-phosphate: step 1/1. Its function is as follows. Involved in amino sugar synthesis (formation of chitin, supplies the amino sugars of asparagine-linked oligosaccharides of glycoproteins). This chain is Glutamine--fructose-6-phosphate aminotransferase [isomerizing] (GFA1), found in Candida albicans (strain SC5314 / ATCC MYA-2876) (Yeast).